The chain runs to 202 residues: Apolipoprotein R (202 aa).

Residues 1 to 28 (MPPNLQRIFPALCLLGVLFLLHCTPVLC) form the signal peptide. Sushi domains are found at residues 29–87 (GCDN…QCKA) and 88–145 (LCPK…KCEW). Intrachain disulfides connect cysteine 30–cysteine 73, cysteine 59–cysteine 85, cysteine 89–cysteine 130, and cysteine 116–cysteine 143.

Forms high molecular weight disulfide-linked complexes. As to expression, plasma. Found on very low-density lipoprotein (VLDL), on chylomicrons, and in the D &gt; 1.21 g/ml fraction of pig plasma. Found in liver, spleen, lung, bone marrow and lymph node.

The protein resides in the secreted. May be a lipoprotein-borne regulator of either the coagulation or the complement cascades. This is Apolipoprotein R (APOR) from Sus scrofa (Pig).